The chain runs to 71 residues: Small ribosomal subunit protein eS31 (71 aa).

Positions 35, 38, 53, and 56 each coordinate Zn(2+). The C4-type zinc-finger motif lies at 35 to 56 (CPKCGAGVFMAEHLNRYACGKC).

The protein belongs to the eukaryotic ribosomal protein eS31 family. In terms of assembly, part of the 30S ribosomal subunit. It depends on Zn(2+) as a cofactor.

This chain is Small ribosomal subunit protein eS31, found in Methanococcus vannielii (strain ATCC 35089 / DSM 1224 / JCM 13029 / OCM 148 / SB).